Here is a 155-residue protein sequence, read N- to C-terminus: Small ribosomal subunit protein uS7c (155 aa).

The protein belongs to the universal ribosomal protein uS7 family. In terms of assembly, part of the 30S ribosomal subunit.

The protein localises to the plastid. Its subcellular location is the chloroplast. Its function is as follows. One of the primary rRNA binding proteins, it binds directly to 16S rRNA where it nucleates assembly of the head domain of the 30S subunit. In Spathiphyllum wallisii (Peace lily), this protein is Small ribosomal subunit protein uS7c (rps7).